The sequence spans 391 residues: Ammonium transporter Amt1 (391 aa).

The Extracellular segment spans residues 1-7; that stretch reads MSDGNVA. Residues 8 to 27 traverse the membrane as a helical segment; the sequence is WILASTALVMLMVPGVGFFY. The Cytoplasmic segment spans residues 28-38; it reads AGMVRRKNAVN. Residues 39–57 form a helical membrane-spanning segment; that stretch reads MIALSFISLIITVLLWIFY. Residues 58 to 89 lie on the Extracellular side of the membrane; the sequence is GYSVSFGNDISGIIGGLNYALLSGVKGEDLLF. A helical transmembrane segment spans residues 90-106; the sequence is MMYQMMFAAVTIAILTS. Topologically, residues 107-113 are cytoplasmic; that stretch reads AIAERAK. Residues 114 to 137 form a helical membrane-spanning segment; that stretch reads VSSFILLSALWLTFVYAPFAHWLW. Over 138–152 the chain is Extracellular; the sequence is GGGWLAKLGALDFAG. A helical membrane pass occupies residues 153–170; sequence GMVVHISSGFAALAVAMT. The Cytoplasmic portion of the chain corresponds to 171 to 188; sequence IGKRAGFEEYSIEPHSIP. The helical transmembrane segment at 189–208 threads the bilayer; the sequence is LTLIGAALLWFGWFGFNGGS. Residues 209-217 are Extracellular-facing; that stretch reads ALAANDVAI. A helical transmembrane segment spans residues 218 to 237; the sequence is NAVVVTNTSAAVAGFVWMVI. Over 238 to 245 the chain is Cytoplasmic; the sequence is GWIKGKPG. A helical membrane pass occupies residues 246–263; sequence SLGIVSGAIAGLAAITPA. Residues 264–268 lie on the Extracellular side of the membrane; that stretch reads AGFVD. Residues 269–287 form a helical membrane-spanning segment; that stretch reads VKGAIVIGLVAGIVCYLAM. Residues 288–300 are Cytoplasmic-facing; that stretch reads DFRIKKKIDESLD. A helical membrane pass occupies residues 301-319; the sequence is AWAIHGIGGLWGSVAVGIL. Residues 320–337 are Extracellular-facing; it reads ANPEVNGYAGLLFGNPQL. Residues 338 to 363 form a helical membrane-spanning segment; sequence LVSQLIAVASTTAYAFLVTLILAKAV. Residues 364–391 are Cytoplasmic-facing; sequence DAAVGLRVSSQEEYVGLDLSQHEEVAYT.

This sequence belongs to the ammonia transporter channel (TC 1.A.11.2) family. Homotrimer.

Its subcellular location is the cell membrane. Its function is as follows. Involved in the uptake of ammonium/ammonia (NH(4)(+)/NH(3)). Transport is electrogenic. Transport the ammonium and methylammonium cation with high specificity. This chain is Ammonium transporter Amt1, found in Archaeoglobus fulgidus (strain ATCC 49558 / DSM 4304 / JCM 9628 / NBRC 100126 / VC-16).